Reading from the N-terminus, the 233-residue chain is Merozoite surface protein 1 (233 aa).

The first 19 residues, 1–19 (MKIIFFLCSFLFFIINTQC), serve as a signal peptide directing secretion. Residues 58 to 67 (SGTAVTTSTP) show a composition bias toward polar residues. Residues 58 to 110 (SGTAVTTSTPGSKGSVASGGSGGSVASGGSVASGGSGNSRRTNPSDNSSDSDA) are disordered. Gly residues predominate over residues 74–94 (ASGGSGGSVASGGSVASGGSG). Residues 95-107 (NSRRTNPSDNSSD) are compositionally biased toward polar residues. N-linked (GlcNAc...) asparagine glycosylation occurs at Asn-104.

As to quaternary structure, forms a complex composed of subunits p83, p30, p38, and p42 which remain non-covalently associated; the complex is formed at the merozoite surface prior to egress from host erythrocytes. Forms a complex composed of processed MSP1 subunits, MSP6 subunit p36 and MSP7; the complex is formed at the merozoite surface prior to egress from host erythrocytes. Within the complex, interacts (via subunit p38) with MSP6 subunit p36 and (via subunits p83, p30 and p38) with MSP7 (via subunit p22). Forms a complex composed of MSP1, MSP6, DBLMSP1 and DBLMSP2. Within the complex, interacts (via subunit p38) with DBLMSP1 and DBLMSP2. Forms a complex composed of MSP1, and rhoptry proteins RhopH3, RAP1 and CLAG9/RhopH3. Within the complex, interacts (via subunits p42 and p19) with RhopH3 (via C-terminus). Forms a complex composed of MSP1, MSP6, MSP7, MSP9 and MSP3; within the complex, MSP6 and MSP9 mediate the binding to the host erythrocyte. Interacts (via subunits p19 and p42) with MSP9; the interaction is direct; MSP1 subunits p19 or p42, and MSP9 form a co-ligand complex that interacts with host SLC4A1/Band 3 protein. May interact with PFD6. Interacts with host spectrin. In terms of processing, the p190 precursor is cleaved by SUB1 prior to merozoite egress into 4 subunits p83, p30, p38, and p42 which remain non-covalently associated. SUB1-mediated proteolytic cleavage occurs in an orderly manner; the first cleavage occurs at the p83/p30 site, followed by cleavage at the p30/p38 site, the last cleavage occurs at the p38/p42 site. The order of cleavage is essential for parasite viability. SUB1-mediated processing is essential for merozoite egress. In a second processing step during erythrocyte invasion, p42 is cleaved by SUB2 into p33 and p19; the latter remains attached to the merozoite surface via its GPI-anchor and stays on the surface during the subsequent ring stage.

The protein resides in the cell membrane. Its subcellular location is the secreted. During the asexual blood stage, involved in merozoite egress from host erythrocytes possibly via its interaction with the host cytoskeleton protein spectrin resulting in the destabilization of the host cytoskeleton and thus leading to erythrocyte cell membrane rupture. Involved in the binding to host erythrocytes and is required for host erythrocyte invasion. In Plasmodium falciparum (isolate CDC / Honduras), this protein is Merozoite surface protein 1.